The primary structure comprises 70 residues: Guanine nucleotide-binding protein subunit gamma-1 (70 aa).

Cysteine 67 bears the Cysteine methyl ester mark. Cysteine 67 carries S-geranylgeranyl cysteine lipidation. Residues 68-70 (TVL) constitute a propeptide, removed in mature form.

The protein belongs to the G protein gamma family. In terms of assembly, g proteins are composed of 3 units, alpha, beta and gamma. In terms of tissue distribution, predominantly expressed in the central nervous system.

It localises to the cell membrane. Guanine nucleotide-binding proteins (G proteins) are involved as a modulator or transducer in various transmembrane signaling systems. The beta and gamma chains are required for the GTPase activity, for replacement of GDP by GTP, and for G protein-effector interaction. In Drosophila melanogaster (Fruit fly), this protein is Guanine nucleotide-binding protein subunit gamma-1 (Ggamma1).